The sequence spans 344 residues: Heat-inducible transcription repressor HrcA (344 aa).

This sequence belongs to the HrcA family.

Its function is as follows. Negative regulator of class I heat shock genes (grpE-dnaK-dnaJ and groELS operons). Prevents heat-shock induction of these operons. The protein is Heat-inducible transcription repressor HrcA of Streptococcus pneumoniae (strain 70585).